A 472-amino-acid polypeptide reads, in one-letter code: MRRNRRGSPARPAARFVRPAIPSALSVALLVCTPGLATADPQTDTIAALIADVAKANQRLQDLSDEVQAEQESVNKAMVDVETARDNAAAAEDDLEVSQRAVKDANAAIAAAQHRFDTFAAATYMNGPSVSYLSASSPDEIIATVTAAKTLSASSQAVMANLQRARTERVNTESAARLAKQKADKAAADAKASQDAAVAALTETRRKFDEQREEVQRLAAERDAAQARLQAARLVAWSSEGGQGAPPFRMWDPGSGPAGGRAWDGLWDPTLPMIPSANIPGDPIAVVNQVLGISATSAQVTANMGRKFLEQLGILQPTDTGITNAPAGSAQGRIPRVYGRQASEYVIRRGMSQIGVPYSWGGGNAAGPSKGIDSGAGTVGFDCSGLVLYSFAGVGIKLPHYSGSQYNLGRKIPSSQMRRGDVIFYGPNGSQHVTIYLGNGQMLEAPDVGLKVRVAPVRTAGMTPYVVRYIEY.

Residues 1–39 (MRRNRRGSPARPAARFVRPAIPSALSVALLVCTPGLATA) constitute a signal peptide (tat-type signal). The region spanning 340–472 (RQASEYVIRR…TPYVVRYIEY (133 aa)) is the NlpC/P60 domain. The active-site Nucleophile is C383. H432 functions as the Proton acceptor in the catalytic mechanism. E444 is a catalytic residue.

It belongs to the peptidase C40 family. In terms of assembly, monomer. Interacts with RpfB and PBP1A (ponA1) via residues 448-472 of RipA, interacts with RpfE. Interacts with the chaperone MoxR1. RipA-MoxR1 interaction in the cytoplasm leads to proper folding of RipA, resulting in its secretion. Also interacts with Mce2B. In terms of processing, exported by the Tat system. The position of the signal peptide cleavage has not been experimentally proven.

The protein resides in the secreted. MoxR1-mediated folding is critical for secretion via the TAT system. The synergistic effects on peptidoglycan degradation of RipA plus RpfB are inhibited by addition of PBP1A (ponA1). Its function is as follows. Peptidoglycan endopeptidase that cleaves the bond between D-glutamate and meso-diaminopimelate. Binds and degrades high-molecular weight peptidoglycan from a number of Actinobacteria; activity is increased in the presence of RpfB and inhibited by PBP1A (ponA1). Required for normal separation of daughter cells after cell division and for cell wall integrity. Required for host cell invasion and intracellular survival in host macrophages. The chain is Peptidoglycan endopeptidase RipA (ripA) from Mycobacterium tuberculosis (strain ATCC 25618 / H37Rv).